Here is a 65-residue protein sequence, read N- to C-terminus: Small, acid-soluble spore protein Tlp (65 aa).

The protein belongs to the Tlp family.

Its subcellular location is the spore core. In Bacillus cereus (strain B4264), this protein is Small, acid-soluble spore protein Tlp.